Here is a 180-residue protein sequence, read N- to C-terminus: tRNA (cytidine(56)-2'-O)-methyltransferase (180 aa).

Residues leucine 82, 112–116 (GAEKV), and 130–137 (VGNQPHSE) contribute to the S-adenosyl-L-methionine site.

This sequence belongs to the aTrm56 family. In terms of assembly, homodimer.

It is found in the cytoplasm. It carries out the reaction cytidine(56) in tRNA + S-adenosyl-L-methionine = 2'-O-methylcytidine(56) in tRNA + S-adenosyl-L-homocysteine + H(+). In terms of biological role, specifically catalyzes the AdoMet-dependent 2'-O-ribose methylation of cytidine at position 56 in tRNAs. This chain is tRNA (cytidine(56)-2'-O)-methyltransferase, found in Methanococcus vannielii (strain ATCC 35089 / DSM 1224 / JCM 13029 / OCM 148 / SB).